The following is a 938-amino-acid chain: Isoleucine--tRNA ligase (938 aa).

Residues 58–68 (PYANGSIHIGH) carry the 'HIGH' region motif. N6-acetyllysine is present on Lys183. Glu561 serves as a coordination point for L-isoleucyl-5'-AMP. The 'KMSKS' region signature appears at 602 to 606 (KMSKS). An ATP-binding site is contributed by Lys605. Zn(2+)-binding residues include Cys901, Cys904, Cys921, and Cys924.

The protein belongs to the class-I aminoacyl-tRNA synthetase family. IleS type 1 subfamily. As to quaternary structure, monomer. The cofactor is Zn(2+).

It is found in the cytoplasm. The catalysed reaction is tRNA(Ile) + L-isoleucine + ATP = L-isoleucyl-tRNA(Ile) + AMP + diphosphate. Catalyzes the attachment of isoleucine to tRNA(Ile). As IleRS can inadvertently accommodate and process structurally similar amino acids such as valine, to avoid such errors it has two additional distinct tRNA(Ile)-dependent editing activities. One activity is designated as 'pretransfer' editing and involves the hydrolysis of activated Val-AMP. The other activity is designated 'posttransfer' editing and involves deacylation of mischarged Val-tRNA(Ile). This chain is Isoleucine--tRNA ligase, found in Escherichia coli (strain 55989 / EAEC).